Reading from the N-terminus, the 134-residue chain is MKATENRKVNEINEILLPLSKNLKNVEGFVIVSKDSLVKVGNIDGEDLEIISRHMAVVMGSSEMLYKRFNDEVEYIEIKGKKHKIILYNLDDFIFAVVGNIKADEIKDKVMELKFKVNNIDGLTAENIIEEIAL.

This is an uncharacterized protein from Methanocaldococcus jannaschii (strain ATCC 43067 / DSM 2661 / JAL-1 / JCM 10045 / NBRC 100440) (Methanococcus jannaschii).